A 148-amino-acid polypeptide reads, in one-letter code: MASKRILKELKDLQKDPPTSCSAGPVAEDMFHWQATIMGPSDSPYSGGVFLVTIHFPPDYPFKPPKVAFRTKVFHPNVNSNGSICLDILKEQWSPALTISKVLLSICSLLTDPNPDDPLVPEIAHMYKTDRAKYESTARSWTQKYAMG.

Residues 1-147 (MASKRILKEL…ARSWTQKYAM (147 aa)) form the UBC core domain. Catalysis depends on Cys85, which acts as the Glycyl thioester intermediate.

It belongs to the ubiquitin-conjugating enzyme family. Interacts with SINAT5. In terms of tissue distribution, expressed in seeds, pistils, siliques, hypocotyls and leaves.

The enzyme catalyses S-ubiquitinyl-[E1 ubiquitin-activating enzyme]-L-cysteine + [E2 ubiquitin-conjugating enzyme]-L-cysteine = [E1 ubiquitin-activating enzyme]-L-cysteine + S-ubiquitinyl-[E2 ubiquitin-conjugating enzyme]-L-cysteine.. It participates in protein modification; protein ubiquitination. Accepts the ubiquitin from the E1 complex and catalyzes its covalent attachment to other proteins. In Arabidopsis thaliana (Mouse-ear cress), this protein is Ubiquitin-conjugating enzyme E2 28.